Reading from the N-terminus, the 852-residue chain is Lon protease homolog 2, peroxisomal (852 aa).

An N-acetylserine modification is found at Ser-2. The region spanning Leu-13–Ile-222 is the Lon N-terminal domain. Gly-375 to Thr-382 contacts ATP. One can recognise a Lon proteolytic domain in the interval Leu-651–Gly-837. Residues Ser-743 and Lys-786 contribute to the active site. The short motif at Ser-850 to Leu-852 is the Microbody targeting signal element.

Belongs to the peptidase S16 family. In terms of assembly, interacts with PEX5. Interacts with TYSND1. May interact with enzymes involved in beta-oxidation of fatty acids, including ACOX1/AOX.

Its subcellular location is the peroxisome matrix. It carries out the reaction Hydrolysis of proteins in presence of ATP.. ATP-dependent serine protease that mediates the selective degradation of misfolded and unassembled polypeptides in the peroxisomal matrix. Necessary for type 2 peroxisome targeting signal (PTS2)-containing protein processing and facilitates peroxisome matrix protein import. May indirectly regulate peroxisomal fatty acid beta-oxidation through degradation of the self-processed forms of TYSND1. The sequence is that of Lon protease homolog 2, peroxisomal (Lonp2) from Rattus norvegicus (Rat).